The primary structure comprises 206 residues: FMN-dependent NADH:quinone oxidoreductase (206 aa).

FMN is bound by residues Ser-15 to Ser-17, Met-94 to Phe-97, and Thr-138 to Gly-141.

This sequence belongs to the azoreductase type 1 family. Homodimer. The cofactor is FMN.

It carries out the reaction 2 a quinone + NADH + H(+) = 2 a 1,4-benzosemiquinone + NAD(+). It catalyses the reaction N,N-dimethyl-1,4-phenylenediamine + anthranilate + 2 NAD(+) = 2-(4-dimethylaminophenyl)diazenylbenzoate + 2 NADH + 2 H(+). Quinone reductase that provides resistance to thiol-specific stress caused by electrophilic quinones. Functionally, also exhibits azoreductase activity. Catalyzes the reductive cleavage of the azo bond in aromatic azo compounds to the corresponding amines. This Sinorhizobium medicae (strain WSM419) (Ensifer medicae) protein is FMN-dependent NADH:quinone oxidoreductase.